A 276-amino-acid polypeptide reads, in one-letter code: Ribosomal RNA small subunit methyltransferase A (276 aa).

S-adenosyl-L-methionine contacts are provided by Asn-27, Leu-29, Gly-54, Glu-75, Asp-101, and Asn-123.

It belongs to the class I-like SAM-binding methyltransferase superfamily. rRNA adenine N(6)-methyltransferase family. RsmA subfamily.

Its subcellular location is the cytoplasm. The enzyme catalyses adenosine(1518)/adenosine(1519) in 16S rRNA + 4 S-adenosyl-L-methionine = N(6)-dimethyladenosine(1518)/N(6)-dimethyladenosine(1519) in 16S rRNA + 4 S-adenosyl-L-homocysteine + 4 H(+). In terms of biological role, specifically dimethylates two adjacent adenosines (A1518 and A1519) in the loop of a conserved hairpin near the 3'-end of 16S rRNA in the 30S particle. May play a critical role in biogenesis of 30S subunits. This is Ribosomal RNA small subunit methyltransferase A from Bartonella tribocorum (strain CIP 105476 / IBS 506).